The primary structure comprises 240 residues: 2,3,4,5-tetrahydropyridine-2,6-dicarboxylate N-acetyltransferase (240 aa).

It belongs to the transferase hexapeptide repeat family. DapH subfamily.

The enzyme catalyses (S)-2,3,4,5-tetrahydrodipicolinate + acetyl-CoA + H2O = L-2-acetamido-6-oxoheptanedioate + CoA. It functions in the pathway amino-acid biosynthesis; L-lysine biosynthesis via DAP pathway; LL-2,6-diaminopimelate from (S)-tetrahydrodipicolinate (acetylase route): step 1/3. Functionally, catalyzes the transfer of an acetyl group from acetyl-CoA to tetrahydrodipicolinate. This Bacillus mycoides (strain KBAB4) (Bacillus weihenstephanensis) protein is 2,3,4,5-tetrahydropyridine-2,6-dicarboxylate N-acetyltransferase.